The sequence spans 189 residues: Protein GrpE (189 aa).

Over residues 1–13 the composition is skewed to polar residues; sequence MSENKQPEQNQDL. The disordered stretch occupies residues 1–35; the sequence is MSENKQPEQNQDLTGEPSPEELEAAQAADEFDAMN.

It belongs to the GrpE family. As to quaternary structure, homodimer.

The protein localises to the cytoplasm. Participates actively in the response to hyperosmotic and heat shock by preventing the aggregation of stress-denatured proteins, in association with DnaK and GrpE. It is the nucleotide exchange factor for DnaK and may function as a thermosensor. Unfolded proteins bind initially to DnaJ; upon interaction with the DnaJ-bound protein, DnaK hydrolyzes its bound ATP, resulting in the formation of a stable complex. GrpE releases ADP from DnaK; ATP binding to DnaK triggers the release of the substrate protein, thus completing the reaction cycle. Several rounds of ATP-dependent interactions between DnaJ, DnaK and GrpE are required for fully efficient folding. In Polaromonas naphthalenivorans (strain CJ2), this protein is Protein GrpE.